We begin with the raw amino-acid sequence, 342 residues long: Glycerol-3-phosphate dehydrogenase [NAD(P)+] (342 aa).

Positions 11, 31, and 102 each coordinate NADPH. Sn-glycerol 3-phosphate-binding residues include Lys102 and Gly132. Ala136 contributes to the NADPH binding site. The sn-glycerol 3-phosphate site is built by Lys187, Asp240, Ser250, Arg251, and Asn252. The Proton acceptor role is filled by Lys187. NADPH is bound at residue Arg251. An NADPH-binding site is contributed by Glu277.

It belongs to the NAD-dependent glycerol-3-phosphate dehydrogenase family.

The protein resides in the cytoplasm. The enzyme catalyses sn-glycerol 3-phosphate + NAD(+) = dihydroxyacetone phosphate + NADH + H(+). The catalysed reaction is sn-glycerol 3-phosphate + NADP(+) = dihydroxyacetone phosphate + NADPH + H(+). It functions in the pathway membrane lipid metabolism; glycerophospholipid metabolism. In terms of biological role, catalyzes the reduction of the glycolytic intermediate dihydroxyacetone phosphate (DHAP) to sn-glycerol 3-phosphate (G3P), the key precursor for phospholipid synthesis. This is Glycerol-3-phosphate dehydrogenase [NAD(P)+] from Symbiobacterium thermophilum (strain DSM 24528 / JCM 14929 / IAM 14863 / T).